The following is a 115-amino-acid chain: MFAAPATMLVLAALAALSSAIPAAQTASKCSTGPVQCCDSVEHHTQPHVNNLLLGLEHFGLVKGLVGGLTGNVGIKCNPILLSSNDCTAQSVCCEHVHFKGNIAVGCTPANIDIL.

The signal sequence occupies residues 1–20; that stretch reads MFAAPATMLVLAALAALSSA. Intrachain disulfides connect Cys30-Cys93, Cys37-Cys87, Cys38-Cys77, and Cys94-Cys107.

Belongs to the fungal hydrophobin family. Self-assembles to form functional amyloid fibrils called rodlets. Self-assembly into fibrillar rodlets occurs spontaneously at hydrophobic:hydrophilic interfaces and the rodlets further associate laterally to form amphipathic monolayers.

It localises to the secreted. Its subcellular location is the cell wall. Aerial growth, conidiation, and dispersal of filamentous fungi in the environment rely upon a capability of their secreting small amphipathic proteins called hydrophobins (HPBs) with low sequence identity. Class I can self-assemble into an outermost layer of rodlet bundles on aerial cell surfaces, conferring cellular hydrophobicity that supports fungal growth, development and dispersal; whereas Class II form highly ordered films at water-air interfaces through intermolecular interactions but contribute nothing to the rodlet structure. In Pleurotus ostreatus (strain PC15) (Oyster mushroom), this protein is Class I hydrophobin 21.